The chain runs to 448 residues: Phosphoglucosamine mutase (448 aa).

Catalysis depends on Ser-100, which acts as the Phosphoserine intermediate. Mg(2+)-binding residues include Ser-100, Asp-240, Asp-242, and Asp-244. Ser-100 carries the post-translational modification Phosphoserine.

This sequence belongs to the phosphohexose mutase family. Requires Mg(2+) as cofactor. Post-translationally, activated by phosphorylation.

The enzyme catalyses alpha-D-glucosamine 1-phosphate = D-glucosamine 6-phosphate. In terms of biological role, catalyzes the conversion of glucosamine-6-phosphate to glucosamine-1-phosphate. The protein is Phosphoglucosamine mutase of Bacillus anthracis (strain A0248).